The following is a 328-amino-acid chain: D-cysteine desulfhydrase (328 aa).

Lysine 51 is subject to N6-(pyridoxal phosphate)lysine.

This sequence belongs to the ACC deaminase/D-cysteine desulfhydrase family. Homodimer. Pyridoxal 5'-phosphate is required as a cofactor.

The enzyme catalyses D-cysteine + H2O = hydrogen sulfide + pyruvate + NH4(+) + H(+). Its function is as follows. Catalyzes the alpha,beta-elimination reaction of D-cysteine and of several D-cysteine derivatives. It could be a defense mechanism against D-cysteine. The polypeptide is D-cysteine desulfhydrase (Salmonella schwarzengrund (strain CVM19633)).